A 486-amino-acid polypeptide reads, in one-letter code: MSRSDWEVVIGLEVHAQLNTASKIFSGASTAFGAEPNVQASAVDIALPGVLPVLNRGAVERAIRFGLAIGATVAPTSVFARKNYFYPDLPKGYQISQFELPVVQGGTITIRVGEGENAYEKTVNLTRAHLEEDAGKSLHEDFHGMSGIDLNRAGTPLLEIVSEPDMRSSAEAVAYARTLHALVRWIDICDGNMQEGSFRCDANVSVRKKGAEKFGTRREIKNLNSFRFLQQAIDYEVQWQIDTIEDGGTIQQATVLFDPDTGETRMMRSKEDAHDYRYFPDPDLLPLVISPEWKARVQGEMPELPEAMKARFIEQLGLSAYDATTLTASKEVATYYQATVDAAGAALAKPCANWVMGDLAARLNKAELDIAVSPVSPAQLAGLVARIADNTISNAIAKKVFEALWNGEGASADEIIDKQGLKQVTDSGAIEAMIDEVLAANQKSVEEFRAGKDKAFNALVGQVMKASKGKASPAQVNELLKKKLAG.

It belongs to the GatB/GatE family. GatB subfamily. Heterotrimer of A, B and C subunits.

It carries out the reaction L-glutamyl-tRNA(Gln) + L-glutamine + ATP + H2O = L-glutaminyl-tRNA(Gln) + L-glutamate + ADP + phosphate + H(+). The catalysed reaction is L-aspartyl-tRNA(Asn) + L-glutamine + ATP + H2O = L-asparaginyl-tRNA(Asn) + L-glutamate + ADP + phosphate + 2 H(+). Allows the formation of correctly charged Asn-tRNA(Asn) or Gln-tRNA(Gln) through the transamidation of misacylated Asp-tRNA(Asn) or Glu-tRNA(Gln) in organisms which lack either or both of asparaginyl-tRNA or glutaminyl-tRNA synthetases. The reaction takes place in the presence of glutamine and ATP through an activated phospho-Asp-tRNA(Asn) or phospho-Glu-tRNA(Gln). This chain is Aspartyl/glutamyl-tRNA(Asn/Gln) amidotransferase subunit B, found in Azoarcus sp. (strain BH72).